A 216-amino-acid chain; its full sequence is Cytidylate kinase (216 aa).

7-15 (GPSGTGKST) lines the ATP pocket.

The protein belongs to the cytidylate kinase family. Type 1 subfamily.

It localises to the cytoplasm. The enzyme catalyses CMP + ATP = CDP + ADP. It catalyses the reaction dCMP + ATP = dCDP + ADP. This is Cytidylate kinase from Chlamydia trachomatis serovar L2 (strain ATCC VR-902B / DSM 19102 / 434/Bu).